A 927-amino-acid chain; its full sequence is Calmodulin-binding transcription activator CBT (927 aa).

Positions 26–152 form a DNA-binding region, CG-1; it reads YEKLVAEAAA…YRQTAEENAM (127 aa). The tract at residues 70-96 is necessary and sufficient for nuclear localization; it reads LYDRKVVRNFRKDGHNWKKKKDGRTVQ. A Nuclear localization signal motif is present at residues 72-79; it reads DRKVVRNF. One copy of the ANK repeat lies at 609 to 638; that stretch reads SGWTALHWAAYHGRERMVATLLSAGANPSL. IQ domains are found at residues 757–786 and 799–828; these read EIVA…IQSH and MRRQ…SVGI. The interval 826-845 is calmodulin-binding; it reads VGIVEKAILRWRKKRKGLRG. The tract at residues 830–851 is necessary and sufficient for nuclear localization; the sequence is EKAILRWRKKRKGLRGIASGMP. The 30-residue stretch at 882–911 folds into the IQ 3 domain; the sequence is FNRSVVRVQALFRSYKAQQEYRRMKIAHEE.

It belongs to the CAMTA family.

It localises to the nucleus. Its activity is regulated as follows. Transcriptional activation activity is strongly reduced by calmodulin. Transcription activator that binds calmodulin in a calcium-dependent manner in vitro. Binds to the DNA consensus sequence 5'-T[AC]CG[CT]GT[GT][GT][GT][GT]T[GT]CG-3'. This is Calmodulin-binding transcription activator CBT from Oryza sativa subsp. japonica (Rice).